Here is an 87-residue protein sequence, read N- to C-terminus: UPF0386 protein RSKD131_0371 (87 aa).

Belongs to the UPF0386 family.

The polypeptide is UPF0386 protein RSKD131_0371 (Cereibacter sphaeroides (strain KD131 / KCTC 12085) (Rhodobacter sphaeroides)).